A 169-amino-acid chain; its full sequence is Small ribosomal subunit protein uS5 (169 aa).

The S5 DRBM domain occupies 15 to 79; sequence LKDQVVAINR…ESAKKNLVKV (65 aa).

This sequence belongs to the universal ribosomal protein uS5 family. As to quaternary structure, part of the 30S ribosomal subunit. Contacts proteins S4 and S8.

Functionally, with S4 and S12 plays an important role in translational accuracy. Its function is as follows. Located at the back of the 30S subunit body where it stabilizes the conformation of the head with respect to the body. This Koribacter versatilis (strain Ellin345) protein is Small ribosomal subunit protein uS5.